The primary structure comprises 798 residues: Nuclear cap-binding protein subunit 1 (798 aa).

The 214-residue stretch at 28–241 folds into the MIF4G domain; it reads EKKLQGVIGK…SLSAQIEALR (214 aa). The disordered stretch occupies residues 663–686; it reads NKIKEEDDEESDIKMDEDETKEEK. Residues 668 to 682 are compositionally biased toward acidic residues; it reads EDDEESDIKMDEDET.

This sequence belongs to the NCBP1 family. In terms of assembly, component of the nuclear cap-binding complex (CBC), a heterodimer composed of ncbp-1 and ncbp-1 that interacts with m7GpppG-capped RNA.

The protein resides in the nucleus. Functionally, component of the cap-binding complex (CBC), which binds cotranscriptionally to the 5'-cap of pre-mRNAs and is involved in various processes such as pre-mRNA splicing and RNA-mediated gene silencing (RNAi). The CBC complex is involved in miRNA-mediated RNA interference and is required for primary microRNAs (miRNAs) processing. In the CBC complex, ncbp-1 does not bind directly capped RNAs (m7GpppG-capped RNA) but is required to stabilize the movement of the N-terminal loop of ncbp-2 and lock the CBC into a high affinity cap-binding state with the cap structure. The protein is Nuclear cap-binding protein subunit 1 (ncbp-1) of Caenorhabditis elegans.